Here is a 144-residue protein sequence, read N- to C-terminus: Peptide methionine sulfoxide reductase B7 (144 aa).

In terms of domain architecture, MsrB spans 19–140 (DEEWRAVLSP…NSVSLKFSSA (122 aa)). Positions 58, 61, 104, and 107 each coordinate Zn(2+). A disulfide bridge connects residues Cys76 and Cys129. Catalysis depends on Cys129, which acts as the Nucleophile.

This sequence belongs to the MsrB Met sulfoxide reductase family. Zn(2+) serves as cofactor.

Its subcellular location is the cytoplasm. The protein resides in the cytosol. It carries out the reaction L-methionyl-[protein] + [thioredoxin]-disulfide + H2O = L-methionyl-(R)-S-oxide-[protein] + [thioredoxin]-dithiol. Functionally, catalyzes the reduction of methionine sulfoxide (MetSO) to methionine in proteins. Plays a protective role against oxidative stress by restoring activity to proteins that have been inactivated by methionine oxidation. MSRB family specifically reduces the MetSO R-enantiomer. The polypeptide is Peptide methionine sulfoxide reductase B7 (MSRB7) (Arabidopsis thaliana (Mouse-ear cress)).